Consider the following 270-residue polypeptide: Bark lectin (270 aa).

An N-terminal signal peptide occupies residues 1–15; that stretch reads ISITFFLLLLNKVNS. N-linked (GlcNAc...) asparagine glycosylation is found at Asn-60, Asn-76, and Asn-127. Mn(2+)-binding residues include Glu-141 and Asp-143. Residues Asp-143, His-145, Asn-147, and Asp-150 each coordinate Ca(2+). Residues Asp-150 and His-155 each contribute to the Mn(2+) site. A glycan (N-linked (GlcNAc...) asparagine) is linked at Asn-201.

Belongs to the leguminous lectin family.

Its function is as follows. GalNAc-specific lectin. This chain is Bark lectin, found in Styphnolobium japonicum (Japanese pagoda tree).